The primary structure comprises 688 residues: DNA ligase (688 aa).

Residues 38–42, 87–88, and Glu-118 each bind NAD(+); these read DEEYD and SL. Lys-120 functions as the N6-AMP-lysine intermediate in the catalytic mechanism. The NAD(+) site is built by Arg-141, Glu-175, Lys-291, and Lys-315. Zn(2+) contacts are provided by Cys-409, Cys-412, Cys-428, and Cys-433. The BRCT domain maps to 590-679; the sequence is MKLDILKGLT…AELKGYNFDE (90 aa).

It belongs to the NAD-dependent DNA ligase family. LigA subfamily. Mg(2+) is required as a cofactor. Mn(2+) serves as cofactor.

It carries out the reaction NAD(+) + (deoxyribonucleotide)n-3'-hydroxyl + 5'-phospho-(deoxyribonucleotide)m = (deoxyribonucleotide)n+m + AMP + beta-nicotinamide D-nucleotide.. In terms of biological role, DNA ligase that catalyzes the formation of phosphodiester linkages between 5'-phosphoryl and 3'-hydroxyl groups in double-stranded DNA using NAD as a coenzyme and as the energy source for the reaction. It is essential for DNA replication and repair of damaged DNA. The protein is DNA ligase of Thermotoga petrophila (strain ATCC BAA-488 / DSM 13995 / JCM 10881 / RKU-1).